The chain runs to 341 residues: Methionine import ATP-binding protein MetN (341 aa).

Residues 2–241 (INLQDVSKVY…PKEQMTKRFV (240 aa)) enclose the ABC transporter domain. 38-45 (GYSGAGKS) contacts ATP.

The protein belongs to the ABC transporter superfamily. Methionine importer (TC 3.A.1.24) family. In terms of assembly, the complex is composed of two ATP-binding proteins (MetN), two transmembrane proteins (MetP) and a solute-binding protein (MetQ).

Its subcellular location is the cell membrane. The enzyme catalyses L-methionine(out) + ATP + H2O = L-methionine(in) + ADP + phosphate + H(+). The catalysed reaction is D-methionine(out) + ATP + H2O = D-methionine(in) + ADP + phosphate + H(+). In terms of biological role, part of the ABC transporter complex MetNPQ involved in methionine import. Responsible for energy coupling to the transport system. It has also been shown to be involved in methionine sulfoxide transport. In Bacillus subtilis (strain 168), this protein is Methionine import ATP-binding protein MetN.